We begin with the raw amino-acid sequence, 111 residues long: MKENKIRKNKEFRHVYRRGKSYSNRLLVLYICKNRCNINRLGVSVSKKVGKSVIRNRVKRLIKESYRLNLDENMKKGYDLVFIARNSSNDRDYKDIESALINLLKKAGIYN.

This sequence belongs to the RnpA family. Consists of a catalytic RNA component (M1 or rnpB) and a protein subunit.

The enzyme catalyses Endonucleolytic cleavage of RNA, removing 5'-extranucleotides from tRNA precursor.. RNaseP catalyzes the removal of the 5'-leader sequence from pre-tRNA to produce the mature 5'-terminus. It can also cleave other RNA substrates such as 4.5S RNA. The protein component plays an auxiliary but essential role in vivo by binding to the 5'-leader sequence and broadening the substrate specificity of the ribozyme. In Clostridium botulinum (strain Okra / Type B1), this protein is Ribonuclease P protein component.